The following is a 644-amino-acid chain: uncharacterized protein (644 aa).

The interval 1–39 (MKANGLDNDPARTRMERTDIDSEHPEAQPLLNNNHRTLG) is disordered. Topologically, residues 1–90 (MKANGLDNDP…ILNILILINT (90 aa)) are cytoplasmic. The span at 9 to 26 (DPARTRMERTDIDSEHPE) shows a compositional bias: basic and acidic residues. Phosphoserine is present on residues serine 22, serine 56, and serine 63. Residues 91–111 (IWLVTTLISDFFFNINILFGF) form a helical membrane-spanning segment. Residues 112–122 (SNRYASFNDLT) are Vacuolar-facing. Residues 123-143 (LIFISIIANSFNLWFNKLGLY) form a helical membrane-spanning segment. The Cytoplasmic portion of the chain corresponds to 144–147 (SALD). Residues 148 to 168 (YSLNVTLCVLTLFNLALTYLI) traverse the membrane as a helical segment. The Vacuolar segment spans residues 169-174 (KYTRQR). The helical transmembrane segment at 175–195 (IGFVGTFTYLWTSFSFFIGAI) threads the bilayer. The Cytoplasmic segment spans residues 196 to 271 (LDWYLLFYNN…EWVSIGFRNT (76 aa)). A disordered region spans residues 225 to 251 (NENHTNSTENRDRSQYGSGSPTPTHRS). Residues 239 to 251 (QYGSGSPTPTHRS) show a composition bias toward polar residues. Serine 244 carries the post-translational modification Phosphoserine. A helical membrane pass occupies residues 272–292 (IKFLILIFFALFTLNTLLTTL). Residues 293–644 (DTYRLTHKLP…IGELGKLTED (352 aa)) lie on the Vacuolar side of the membrane. One can recognise an AB hydrolase-1 domain in the interval 348–619 (PIILFEHGGY…IVEGGHEIYK (272 aa)). Residues 469–492 (GRGDGDDGDDGNGNDGDGRNHDKT) are disordered.

The protein resides in the vacuole membrane. This is an uncharacterized protein from Saccharomyces cerevisiae (strain YJM789) (Baker's yeast).